Here is a 273-residue protein sequence, read N- to C-terminus: HTH-type transcriptional activator RhaS (273 aa).

In terms of domain architecture, HTH araC/xylS-type spans 174-272 (YQLLDWLQNN…SQSPRDLRSQ (99 aa)). 2 consecutive DNA-binding regions (H-T-H motif) follow at residues 191–212 (PELA…KNKT) and 239–262 (VTDI…KREF).

As to quaternary structure, binds DNA as a dimer.

The protein resides in the cytoplasm. In terms of biological role, activates expression of the rhaBAD and rhaT operons. This chain is HTH-type transcriptional activator RhaS, found in Yersinia pestis bv. Antiqua (strain Angola).